Reading from the N-terminus, the 249-residue chain is 5'-nucleotidase SurE (249 aa).

Asp9, Asp10, Ser40, and Asn92 together coordinate a divalent metal cation.

This sequence belongs to the SurE nucleotidase family. It depends on a divalent metal cation as a cofactor.

It localises to the cytoplasm. It catalyses the reaction a ribonucleoside 5'-phosphate + H2O = a ribonucleoside + phosphate. Nucleotidase that shows phosphatase activity on nucleoside 5'-monophosphates. This chain is 5'-nucleotidase SurE, found in Shewanella loihica (strain ATCC BAA-1088 / PV-4).